A 709-amino-acid polypeptide reads, in one-letter code: Leucine-rich repeat and calponin homology domain-containing protein 1 (709 aa).

Residues Leu-24–His-37 show a composition bias toward basic residues. The tract at residues Leu-24–Leu-49 is disordered. 9 LRR repeats span residues Ala-60–Gly-83, Leu-86–Gln-108, Phe-109–Asn-131, Leu-132–Leu-155, Leu-157–Gln-176, Leu-177–Gln-199, Leu-200–Leu-223, Leu-225–Glu-244, and Met-245–Lys-268. Composition is skewed to basic and acidic residues over residues His-301–Asp-312 and Gln-381–Ala-390. Positions His-301–Ala-390 are disordered. Ser-395, Ser-518, and Ser-522 each carry phosphoserine. The segment at Ser-504 to Asn-526 is disordered. Residue Thr-581 is modified to Phosphothreonine. The region spanning Met-589–Thr-702 is the Calponin-homology (CH) domain.

Interacts (via LRR repeats) with unphosphorylated DOCK8 (via DHR-2 domain); the interaction prevents the association between DOCK8 and CDC42.

The protein localises to the cytoplasm. Its function is as follows. Acts as a negative regulator of GTPase CDC42 by sequestering CDC42-guanine exchange factor DOCK8. Probably by preventing CDC42 activation, negatively regulates CD4(+) T-cell migration in response to chemokine stimulation. In Mus musculus (Mouse), this protein is Leucine-rich repeat and calponin homology domain-containing protein 1 (Lrch1).